A 171-amino-acid polypeptide reads, in one-letter code: ATP synthase subunit b (171 aa).

The chain crosses the membrane as a helical span at residues 26-46 (INLVLVIALLVYFLKGFLGGI).

Belongs to the ATPase B chain family. In terms of assembly, F-type ATPases have 2 components, F(1) - the catalytic core - and F(0) - the membrane proton channel. F(1) has five subunits: alpha(3), beta(3), gamma(1), delta(1), epsilon(1). F(0) has four main subunits: a(1), b(1), b'(1) and c(10-14). The alpha and beta chains form an alternating ring which encloses part of the gamma chain. F(1) is attached to F(0) by a central stalk formed by the gamma and epsilon chains, while a peripheral stalk is formed by the delta, b and b' chains.

Its subcellular location is the cellular thylakoid membrane. In terms of biological role, f(1)F(0) ATP synthase produces ATP from ADP in the presence of a proton or sodium gradient. F-type ATPases consist of two structural domains, F(1) containing the extramembraneous catalytic core and F(0) containing the membrane proton channel, linked together by a central stalk and a peripheral stalk. During catalysis, ATP synthesis in the catalytic domain of F(1) is coupled via a rotary mechanism of the central stalk subunits to proton translocation. Functionally, component of the F(0) channel, it forms part of the peripheral stalk, linking F(1) to F(0). This Synechococcus sp. (strain RCC307) protein is ATP synthase subunit b.